Reading from the N-terminus, the 266-residue chain is Small ribosomal subunit protein uS3 (266 aa).

Residues 39-107 (VREYLKKKLK…PVHVNIEEIR (69 aa)) form the KH type-2 domain. Residues 218–266 (EVAEDKRPRRNARPGDRRPRRDGEGGAPGARRGAPRRGAGKPEDGKTGE) are disordered. Basic and acidic residues-rich tracts occupy residues 230–241 (RPGDRRPRRDGE) and 257–266 (GKPEDGKTGE).

Belongs to the universal ribosomal protein uS3 family. As to quaternary structure, part of the 30S ribosomal subunit. Forms a tight complex with proteins S10 and S14.

Binds the lower part of the 30S subunit head. Binds mRNA in the 70S ribosome, positioning it for translation. The chain is Small ribosomal subunit protein uS3 from Burkholderia ambifaria (strain MC40-6).